The following is a 219-amino-acid chain: Thymidylate kinase (219 aa).

7–14 is an ATP binding site; sequence GIDGCGKT.

This sequence belongs to the thymidylate kinase family.

It carries out the reaction dTMP + ATP = dTDP + ADP. Its function is as follows. Phosphorylation of dTMP to form dTDP in both de novo and salvage pathways of dTTP synthesis. The polypeptide is Thymidylate kinase (Anaplasma phagocytophilum (strain HZ)).